Consider the following 402-residue polypeptide: O-glucosyltransferase rumi homolog (402 aa).

The N-terminal stretch at Met1–Ser20 is a signal peptide. 4 disulfide bridges follow: Cys67-Cys74, Cys72-Cys375, Cys118-Cys124, and Cys279-Cys302. A glycan (N-linked (GlcNAc...) asparagine) is linked at Asn71. Asp149 (proton donor/acceptor) is an active-site residue. Residues Ala189–Pro194 are interaction with the consensus sequence C-X-S-X-[PA]-C in peptide substrates. UDP-alpha-D-glucose contacts are provided by residues Arg226–Thr230, Arg234, Val273–Leu275, and Ala291–Arg295.

This sequence belongs to the glycosyltransferase 90 family.

It is found in the endoplasmic reticulum lumen. The protein localises to the secreted. The protein operates within protein modification; protein glycosylation. Protein O-glucosyltransferase. Catalyzes the reaction that attaches glucose through an O-glycosidic linkage to a conserved serine residue found in the consensus sequence C-X-S-X-[PA]-C in epidermal growth factor-like repeats. Regulates Notch signaling by glucosylating Notch in the ER, glucosylation is required for the correct folding and cleavage of Notch. The polypeptide is O-glucosyltransferase rumi homolog (Aedes aegypti (Yellowfever mosquito)).